The sequence spans 445 residues: Rab GDP dissociation inhibitor beta (445 aa).

Methionine 1 is subject to N-acetylmethionine. An N6-succinyllysine modification is found at lysine 57. Position 112 is an N6-acetyllysine (lysine 112). Residue serine 130 is modified to Phosphoserine. At lysine 269 the chain carries N6-acetyllysine. Serine 382 carries the phosphoserine modification.

The protein belongs to the Rab GDI family. Interacts with RHOH. Interacts with the GDP-bound inactive forms of RAB3A, RAB3B, RAB3C, RAB5A, RAB5B, RAB5C, RAB8A, RAB8B, RAB10, RAB12, RAB35, and RAB43; binds RAB3D to a lesser extent. Interacts with DZIP1; this interaction negatively regulates the interaction of GDI2 with GDP-bound RAB8A. Ubiquitously expressed.

Its subcellular location is the cytoplasm. It is found in the membrane. It localises to the golgi apparatus. The protein localises to the trans-Golgi network. GDP-dissociation inhibitor preventing the GDP to GTP exchange of most Rab proteins. By keeping these small GTPases in their inactive GDP-bound form regulates intracellular membrane trafficking. Negatively regulates protein transport to the cilium and ciliogenesis through the inhibition of RAB8A. This Rattus norvegicus (Rat) protein is Rab GDP dissociation inhibitor beta (Gdi2).